The chain runs to 122 residues: Serum amyloid A-1 protein (122 aa).

The signal sequence occupies residues 1–19 (MKLLTSLVFCSLLLGVCHG). An important for amyloid formation region spans residues 20-45 (GFFSFVHEAFQGAGDMWRAYTDMKEA). Positions 91–108 (HEDTIADQEANRHGRSGK) are enriched in basic and acidic residues. Residues 91-122 (HEDTIADQEANRHGRSGKDPNYYRPPGLPDKY) are disordered.

This sequence belongs to the SAA family. As to quaternary structure, homohexamer; dimer of trimers. Can form amyloid fibrils after partial proteolysis; the native, undenatured protein does not form amyloid fibrils (in vitro). Apolipoprotein of the HDL complex. Binds to heparin. In terms of tissue distribution, detected in blood plasma (at protein level). Detected in liver.

The protein localises to the secreted. Major acute phase protein. The polypeptide is Serum amyloid A-1 protein (Saa1) (Mus musculus (Mouse)).